A 228-amino-acid polypeptide reads, in one-letter code: Deoxyguanosine kinase (228 aa).

8–16 (GPIGAGKSS) provides a ligand contact to ATP. Positions 32, 44, and 55 each coordinate substrate. Catalysis depends on aspartate 78, which acts as the Proton acceptor. Positions 79, 84, and 149 each coordinate substrate.

The protein belongs to the DCK/DGK family. As to quaternary structure, heterodimer of a deoxyadenosine (DAK) and a deoxyguanosine kinase (DGK).

It catalyses the reaction 2'-deoxyguanosine + ATP = dGMP + ADP + H(+). Functionally, DGK/DAK plays an essential role in generating the deoxyribonucleotide precursors, dGTP and dATP, for DNA metabolism. The sequence is that of Deoxyguanosine kinase from Lactobacillus acidophilus (strain ATCC 700396 / NCK56 / N2 / NCFM).